A 372-amino-acid polypeptide reads, in one-letter code: UDP-N-acetylglucosamine--N-acetylmuramyl-(pentapeptide) pyrophosphoryl-undecaprenol N-acetylglucosamine transferase (372 aa).

UDP-N-acetyl-alpha-D-glucosamine-binding positions include 14–16 (TGG), Asn-128, Arg-169, Ser-201, Ile-257, and Gln-302.

Belongs to the glycosyltransferase 28 family. MurG subfamily.

It is found in the cell inner membrane. The enzyme catalyses di-trans,octa-cis-undecaprenyl diphospho-N-acetyl-alpha-D-muramoyl-L-alanyl-D-glutamyl-meso-2,6-diaminopimeloyl-D-alanyl-D-alanine + UDP-N-acetyl-alpha-D-glucosamine = di-trans,octa-cis-undecaprenyl diphospho-[N-acetyl-alpha-D-glucosaminyl-(1-&gt;4)]-N-acetyl-alpha-D-muramoyl-L-alanyl-D-glutamyl-meso-2,6-diaminopimeloyl-D-alanyl-D-alanine + UDP + H(+). It functions in the pathway cell wall biogenesis; peptidoglycan biosynthesis. Its function is as follows. Cell wall formation. Catalyzes the transfer of a GlcNAc subunit on undecaprenyl-pyrophosphoryl-MurNAc-pentapeptide (lipid intermediate I) to form undecaprenyl-pyrophosphoryl-MurNAc-(pentapeptide)GlcNAc (lipid intermediate II). This is UDP-N-acetylglucosamine--N-acetylmuramyl-(pentapeptide) pyrophosphoryl-undecaprenol N-acetylglucosamine transferase from Bacteroides thetaiotaomicron (strain ATCC 29148 / DSM 2079 / JCM 5827 / CCUG 10774 / NCTC 10582 / VPI-5482 / E50).